A 433-amino-acid polypeptide reads, in one-letter code: Divergent protein kinase domain 2B (433 aa).

Positions 1–31 (MEPQLGPEAAALRPGWLALLLWVSALSCSFS) are cleaved as a signal peptide. Asn-100 is a glycosylation site (N-linked (GlcNAc...) asparagine).

The protein belongs to the DIPK family.

The protein localises to the secreted. The protein is Divergent protein kinase domain 2B of Homo sapiens (Human).